Reading from the N-terminus, the 42-residue chain is Photosystem II reaction center protein J (42 aa).

A helical membrane pass occupies residues 10–30 (IPLWLVGTVVGLLAIGLLALF).

Belongs to the PsbJ family. As to quaternary structure, PSII is composed of 1 copy each of membrane proteins PsbA, PsbB, PsbC, PsbD, PsbE, PsbF, PsbH, PsbI, PsbJ, PsbK, PsbL, PsbM, PsbT, PsbX, PsbY, PsbZ, Psb30/Ycf12, at least 3 peripheral proteins of the oxygen-evolving complex and a large number of cofactors. It forms dimeric complexes.

The protein resides in the plastid. Its subcellular location is the chloroplast thylakoid membrane. Functionally, one of the components of the core complex of photosystem II (PSII). PSII is a light-driven water:plastoquinone oxidoreductase that uses light energy to abstract electrons from H(2)O, generating O(2) and a proton gradient subsequently used for ATP formation. It consists of a core antenna complex that captures photons, and an electron transfer chain that converts photonic excitation into a charge separation. This Mesostigma viride (Green alga) protein is Photosystem II reaction center protein J.